We begin with the raw amino-acid sequence, 95 residues long: UPF0358 protein GK1077 (95 aa).

The protein belongs to the UPF0358 family.

The polypeptide is UPF0358 protein GK1077 (Geobacillus kaustophilus (strain HTA426)).